The chain runs to 120 residues: Ribosome-binding factor A (120 aa).

It belongs to the RbfA family. In terms of assembly, monomer. Binds 30S ribosomal subunits, but not 50S ribosomal subunits or 70S ribosomes.

Its subcellular location is the cytoplasm. In terms of biological role, one of several proteins that assist in the late maturation steps of the functional core of the 30S ribosomal subunit. Associates with free 30S ribosomal subunits (but not with 30S subunits that are part of 70S ribosomes or polysomes). Required for efficient processing of 16S rRNA. May interact with the 5'-terminal helix region of 16S rRNA. This Chlamydia caviae (strain ATCC VR-813 / DSM 19441 / 03DC25 / GPIC) (Chlamydophila caviae) protein is Ribosome-binding factor A.